The sequence spans 177 residues: Dihydrofolate reductase (177 aa).

It catalyses the reaction (6S)-5,6,7,8-tetrahydrofolate + NADP(+) = 7,8-dihydrofolate + NADPH + H(+). Provides the tetrahydrofolates necessary for the synthesis of nucleotides and amino acids. Bacteriophage T5 induces high levels of dihydrofolate reductase in the host cell, probably for the viral replication. This is Dihydrofolate reductase from Escherichia phage T5 (Enterobacteria phage T5).